Consider the following 611-residue polypeptide: Chloroplast sensor kinase, chloroplastic (611 aa).

Residues 1–79 constitute a chloroplast transit peptide; sequence MLLSAIASQT…PGGGETMVAS (79 aa). The disordered stretch occupies residues 17-50; that stretch reads NLHFSNSIPNPRPSNPSLKLLNASSSSSSSSSSS. The span at 40-50 shows a compositional bias: low complexity; sequence SSSSSSSSSSS. A GAF region spans residues 116–300; that stretch reads DFQRLCLEQL…VMDQKTMLLQ (185 aa). C121 provides a ligand contact to [3Fe-4S] cluster. Residue S188 is modified to Phosphoserine. Residues 312 to 602 enclose the Histidine kinase domain; that stretch reads KLVEQIRGPL…RVELWLPAFP (291 aa). The stretch at 345–380 forms a coiled coil; the sequence is VEDLIVQGDQIKDTLEELQDAVHLTKANIVRHNEEA. Positions 385–402 are enriched in basic and acidic residues; sequence NKTHNETRRSKYEHKDPI. A disordered region spans residues 385 to 420; that stretch reads NKTHNETRRSKYEHKDPIDGSQISSTRLSLGSGLDD.

Belongs to the chloroplast sensor kinase protein family. Self-interacts. Interacts with the plastoquinone analog 2,5-dibromo-3-methyl-5-isopropyl-p-benzoquinone (DBMIB) and with SIGA/SIG1. [3Fe-4S] cluster serves as cofactor. Post-translationally, autophosphorylated, possibly on tyrosine residues, in photosystem I (PS I) light and in the presence of manganese ions Mn(2+), to a lesser degree, in the presence of calcium ions Ca(2+), but not in the presence of magnesium ions Mg(2+). Dithiothreitol (DTT) stimulates autophosphorylation. Phosphorylated on Ser-188 in vivo after exposure to far-red light (when plastoquinone (PQ) is oxidized). Not phosphorylated under orange light (reduces PQ).

It is found in the plastid. Its subcellular location is the chloroplast stroma. It carries out the reaction L-tyrosyl-[protein] + ATP = O-phospho-L-tyrosyl-[protein] + ADP + H(+). Its function is as follows. Sensor kinase that senses the plastoquinone (PQ) redox state involved in stoichiometry adjustment of both photosystems (e.g. long-term adaptation via transcriptional regulation of reaction center genes of photosystems I and II) and state transitions (e.g. short-term adaptation involving reversible post-translational phosphorylation of light-harvesting complex II, LHC II), thus linking photosynthesis with gene expression in chloroplasts. Autophosphorylates, probably on a tyrosine residue. Probably phosphorylates SIGA/SIG1 in response to plastoquinone redox state modification. Reduced PQ suppresses its autophosphorylation activity. Represses expression of a number of chloroplast-encoded genes. This is Chloroplast sensor kinase, chloroplastic from Arabidopsis thaliana (Mouse-ear cress).